Reading from the N-terminus, the 269-residue chain is Extracellular metalloprotease UREG_07765 (269 aa).

An N-terminal signal peptide occupies residues methionine 1–alanine 18. N-linked (GlcNAc...) asparagine glycosylation is present at asparagine 179. Histidine 191 contributes to the Zn(2+) binding site. Residue glutamate 192 is part of the active site. Histidine 195 lines the Zn(2+) pocket. Positions valine 207–cysteine 227 are disordered. Residues threonine 210–aspartate 225 are compositionally biased toward polar residues. Cysteines 220 and 246 form a disulfide.

Belongs to the peptidase M43B family.

Its subcellular location is the secreted. Its function is as follows. Secreted metalloproteinase that allows assimilation of proteinaceous substrates. The chain is Extracellular metalloprotease UREG_07765 from Uncinocarpus reesii (strain UAMH 1704).